Here is a 313-residue protein sequence, read N- to C-terminus: Spermatid maturation protein 1 (313 aa).

A helical transmembrane segment spans residues 29-49 (ILLLLGLIICINIGINMVTLL). 4 disordered regions span residues 71 to 90 (KLRS…PAVH), 97 to 151 (AVKM…HNWD), 243 to 263 (EPPI…SSGR), and 291 to 313 (LASG…MTER). A compositionally biased stretch (polar residues) spans 76–85 (GKQTQPSKHS). The span at 107–122 (TRRRHRRGSSSRRARR) shows a compositional bias: basic residues. A coiled-coil region spans residues 263-289 (RVTYDARDVRRRLRELTREVEALSHCY). The segment covering 300-313 (GTRKDWVYRSMTER) has biased composition (basic and acidic residues).

Its subcellular location is the membrane. It localises to the cytoplasm. Its function is as follows. Required for proper cytoplasm removal during spermatogenesis. The protein is Spermatid maturation protein 1 (SPEM1) of Bos taurus (Bovine).